Here is a 715-residue protein sequence, read N- to C-terminus: Scinderin (715 aa).

Residues 1–363 form an actin-severing region; sequence MAQGLYHEEF…DGFGKVYVTE (363 aa). Residues 27–77 form a Gelsolin-like 1 repeat; it reads LELVPVPESAYGNFYVGDAYLVLHTTQASRGFTYRLHFWLGKECTQDESTA. Y102 carries the phosphotyrosine modification. A 1,2-diacyl-sn-glycero-3-phospho-(1D-myo-inositol-4,5-bisphosphate)-binding positions include 112-119 and 138-146; these read KGGLKYKA and RLLHVKGRR. 4 Gelsolin-like repeats span residues 148–188, 265–307, 398–451, and 523–564; these read VRAT…YERL, LVAE…QERK, VQIW…DELT, and TRIM…EEEK. Residues 364–715 are actin-binding, Ca-sensitive; it reads KVAHVKQIPF…WFLGWDSSRW (352 aa). A ca(2+)-dependent actin binding region spans residues 364 to 715; the sequence is KVAHVKQIPF…WFLGWDSSRW (352 aa). Positions 538, 539, and 562 each coordinate Ca(2+). Y599 is modified (phosphotyrosine). The Gelsolin-like 6 repeat unit spans residues 626-668; it reads FIIEEVPGEFTQDDLAEDDVMLLDAWEQIFIWIGKDANEVEKS. 3 residues coordinate Ca(2+): D643, D644, and E666.

Belongs to the villin/gelsolin family. In terms of processing, the N-terminus is blocked. As to expression, in the adrenal gland, expressed in the medulla but, in the cortex, found only in diffuse parts.

It is found in the cytoplasm. It localises to the cytoskeleton. The protein resides in the cell projection. Its subcellular location is the podosome. Its function is as follows. Ca(2+)-dependent actin filament-severing protein that has a regulatory function in exocytosis by affecting the organization of the microfilament network underneath the plasma membrane. In vitro, also has barbed end capping and nucleating activities in the presence of Ca(2+). Severing activity is inhibited by phosphatidylinositol 4,5-bis-phosphate (PIP2). Required for megakaryocyte differentiation, maturation, polyploidization and apoptosis with the release of platelet-like particles. Plays a role in osteoclastogenesis (OCG) and actin cytoskeletal organization in osteoclasts. Regulates chondrocyte proliferation and differentiation. Inhibits cell proliferation and tumorigenesis. Signaling is mediated by MAPK, p38 and JNK pathways. This Bos taurus (Bovine) protein is Scinderin.